Here is a 417-residue protein sequence, read N- to C-terminus: NADH-quinone oxidoreductase subunit D (417 aa).

Belongs to the complex I 49 kDa subunit family. As to quaternary structure, NDH-1 is composed of 14 different subunits. Subunits NuoB, C, D, E, F, and G constitute the peripheral sector of the complex.

It is found in the cell inner membrane. It catalyses the reaction a quinone + NADH + 5 H(+)(in) = a quinol + NAD(+) + 4 H(+)(out). Functionally, NDH-1 shuttles electrons from NADH, via FMN and iron-sulfur (Fe-S) centers, to quinones in the respiratory chain. The immediate electron acceptor for the enzyme in this species is believed to be ubiquinone. Couples the redox reaction to proton translocation (for every two electrons transferred, four hydrogen ions are translocated across the cytoplasmic membrane), and thus conserves the redox energy in a proton gradient. The polypeptide is NADH-quinone oxidoreductase subunit D (Verminephrobacter eiseniae (strain EF01-2)).